The sequence spans 376 residues: Glutamate 5-kinase (376 aa).

An ATP-binding site is contributed by Lys18. Substrate is bound by residues Ser58, Asp145, and Asn157. ATP contacts are provided by residues 177–178 (SD) and 218–224 (TGGMASK). The PUA domain occupies 280–358 (TGALTLDAGA…SELPGELRRP (79 aa)).

It belongs to the glutamate 5-kinase family.

Its subcellular location is the cytoplasm. The catalysed reaction is L-glutamate + ATP = L-glutamyl 5-phosphate + ADP. It functions in the pathway amino-acid biosynthesis; L-proline biosynthesis; L-glutamate 5-semialdehyde from L-glutamate: step 1/2. Its function is as follows. Catalyzes the transfer of a phosphate group to glutamate to form L-glutamate 5-phosphate. This Mycobacterium tuberculosis (strain ATCC 25177 / H37Ra) protein is Glutamate 5-kinase.